The primary structure comprises 1376 residues: DNA-directed RNA polymerase subunit beta (1376 aa).

The segment covering 1357 to 1368 (NSKTGRQTNPGT) has biased composition (polar residues). Residues 1357–1376 (NSKTGRQTNPGTRENLPAAE) are disordered.

This sequence belongs to the RNA polymerase beta chain family. As to quaternary structure, the RNAP catalytic core consists of 2 alpha, 1 beta, 1 beta' and 1 omega subunit. When a sigma factor is associated with the core the holoenzyme is formed, which can initiate transcription.

It carries out the reaction RNA(n) + a ribonucleoside 5'-triphosphate = RNA(n+1) + diphosphate. Functionally, DNA-dependent RNA polymerase catalyzes the transcription of DNA into RNA using the four ribonucleoside triphosphates as substrates. The polypeptide is DNA-directed RNA polymerase subunit beta (Azorhizobium caulinodans (strain ATCC 43989 / DSM 5975 / JCM 20966 / LMG 6465 / NBRC 14845 / NCIMB 13405 / ORS 571)).